The sequence spans 622 residues: Zinc finger protein ZIC 5 (622 aa).

4 disordered regions span residues 50–171 (MHLH…KGHS), 190–223 (HGAPLGGEQRSGSSSPQHPTPPPHPAGMFISASG), 232–251 (GSALFPALHDSPGAPGGHPL), and 321–349 (PGPHLQHHAPPPAPPPAPAPHPHHPHLPG). Pro residues predominate over residues 126–151 (APPPPAPPLPPSQSSSPPPPPPPPPA). A compositionally biased stretch (pro residues) spans 329–340 (APPPAPPPAPAP). The segment at 422–444 (EDCPREGKPFKAKYKLINHIRVH) adopts a C2H2-type 1; degenerate zinc-finger fold. 3 consecutive C2H2-type zinc fingers follow at residues 450–474 (FPCPFPGCGKVFARSENLKIHKRTH), 480–504 (FKCEFDGCDRKFANSSDRKKHSHVH), and 510–534 (YYCKIRGCDKSYTHPSSLRKHMKIH). 2 disordered regions span residues 531 to 573 (MKIH…STLS) and 590 to 622 (APSHLHTPSSNGTTSESEDEEMYGNPEVMRTIH). 3 positions are modified to phosphoserine: Ser-537, Ser-541, and Ser-559. The span at 595–604 (HTPSSNGTTS) shows a compositional bias: polar residues.

This sequence belongs to the GLI C2H2-type zinc-finger protein family.

It is found in the nucleus. Its function is as follows. Essential for neural crest development, converting cells from an epidermal fate to a neural crest cell fate. Binds to DNA. This chain is Zinc finger protein ZIC 5 (Zic5), found in Mus musculus (Mouse).